The sequence spans 667 residues: Protein OS-9 (667 aa).

Residues 1–25 (MAAETLLSSLLGLLLLGLLLPASLT) form the signal peptide. In terms of domain architecture, MRH spans 108 to 230 (APCLLKTKDW…TIRTPRLCPH (123 aa)). An intrachain disulfide couples C110 to C123. Residues W117, W118, and Q130 each coordinate a mannooligosaccharide derivative. Residue N177 is glycosylated (N-linked (GlcNAc...) asparagine). Disulfide bonds link C181–C216 and C196–C228. A mannooligosaccharide derivative is bound by residues D182, R188, E212, and Y218. Disordered stretches follow at residues 284 to 355 (WSET…NNVQ), 372 to 452 (LKGG…RDRL), 464 to 483 (LENIIQETEKELDPDGLKKE), 504 to 540 (LEEKQSPELVKKHKKKRVVPKKPPPSPQPTEEDPEHR), and 633 to 667 (AQKERQRQKELESNYRRVWGSPGGEGTGDLDEFDF). Composition is skewed to basic and acidic residues over residues 302-311 (TKDDSKDSDF) and 396-412 (PQREPEKERGDPERQRE). A compositionally biased stretch (acidic residues) spans 413–429 (MEEEEDEDEDEDEDEDE). The span at 430-452 (RQLLGEFEKELEGILLPSDRDRL) shows a compositional bias: basic and acidic residues. Basic and acidic residues predominate over residues 504-513 (LEEKQSPELV). The segment covering 514–523 (KKHKKKRVVP) has biased composition (basic residues). Residues 633–647 (AQKERQRQKELESNY) are compositionally biased toward basic and acidic residues.

Belongs to the OS-9 family. Component of the HRD1 complex, which comprises at least SYNV1/HRD1, DERL1/2, FAM8A1, HERPUD1/HERP, OS9, SEL1L and UBE2J1. FAM8A1 is stabilized by interaction with SYNV1, which prevents its proteasomal degradation. OS9 and UBE2J1 recruitment to the complex may be mediated by SEL1L. Through this complex, may interact with ERLEC1 and HSPA5. Interacts (via C-terminus) with CPNE6 (via second C2 domain); this interaction occurs in a calcium-dependent manner in vitro. Interacts with CREB3. Intramolecular disulfide bonds. In terms of processing, isoform 1 and isoform 2 are N-glycosylated. As to expression, ubiquitously expressed. Found as well in all tumor cell lines analyzed, amplified in sarcomas. Highly expressed in osteosarcoma SJSA-1 and rhabdomyosarcoma Rh30 cell lines. Isoform 2 is the major isoform detected in all cell types examined.

It localises to the endoplasmic reticulum lumen. Its function is as follows. Lectin component of the HRD1 complex, which functions in endoplasmic reticulum (ER) quality control and ER-associated degradation (ERAD). Specifically recognizes and binds improperly folded glycoproteins as well as hyperglycosylated proteins, retain them in the ER, and transfers them to the ubiquitination machinery and promote their degradation. Possible targets include TRPV4 as well as hyperglycosylated HSP90B1. This Homo sapiens (Human) protein is Protein OS-9 (OS9).